Here is a 1341-residue protein sequence, read N- to C-terminus: DNA-directed RNA polymerase subunit beta (1341 aa).

It belongs to the RNA polymerase beta chain family. The RNAP catalytic core consists of 2 alpha, 1 beta, 1 beta' and 1 omega subunit. When a sigma factor is associated with the core the holoenzyme is formed, which can initiate transcription.

It carries out the reaction RNA(n) + a ribonucleoside 5'-triphosphate = RNA(n+1) + diphosphate. Functionally, DNA-dependent RNA polymerase catalyzes the transcription of DNA into RNA using the four ribonucleoside triphosphates as substrates. The polypeptide is DNA-directed RNA polymerase subunit beta (Blochmanniella pennsylvanica (strain BPEN)).